A 252-amino-acid chain; its full sequence is 2-succinyl-6-hydroxy-2,4-cyclohexadiene-1-carboxylate synthase (252 aa).

This sequence belongs to the AB hydrolase superfamily. MenH family. In terms of assembly, monomer.

It catalyses the reaction 5-enolpyruvoyl-6-hydroxy-2-succinyl-cyclohex-3-ene-1-carboxylate = (1R,6R)-6-hydroxy-2-succinyl-cyclohexa-2,4-diene-1-carboxylate + pyruvate. It functions in the pathway quinol/quinone metabolism; 1,4-dihydroxy-2-naphthoate biosynthesis; 1,4-dihydroxy-2-naphthoate from chorismate: step 3/7. It participates in quinol/quinone metabolism; menaquinone biosynthesis. Functionally, catalyzes a proton abstraction reaction that results in 2,5-elimination of pyruvate from 2-succinyl-5-enolpyruvyl-6-hydroxy-3-cyclohexene-1-carboxylate (SEPHCHC) and the formation of 2-succinyl-6-hydroxy-2,4-cyclohexadiene-1-carboxylate (SHCHC). The chain is 2-succinyl-6-hydroxy-2,4-cyclohexadiene-1-carboxylate synthase from Escherichia coli (strain UTI89 / UPEC).